Consider the following 340-residue polypeptide: Heat-inducible transcription repressor HrcA (340 aa).

Belongs to the HrcA family.

In terms of biological role, negative regulator of class I heat shock genes (grpE-dnaK-dnaJ and groELS operons). Prevents heat-shock induction of these operons. The protein is Heat-inducible transcription repressor HrcA of Mycoplasmopsis synoviae (strain 53) (Mycoplasma synoviae).